A 99-amino-acid polypeptide reads, in one-letter code: Nucleoid-associated protein SZO_16661 (99 aa).

This sequence belongs to the YbaB/EbfC family. As to quaternary structure, homodimer.

The protein resides in the cytoplasm. It is found in the nucleoid. Functionally, binds to DNA and alters its conformation. May be involved in regulation of gene expression, nucleoid organization and DNA protection. This is Nucleoid-associated protein SZO_16661 from Streptococcus equi subsp. zooepidemicus (strain H70).